Here is a 195-residue protein sequence, read N- to C-terminus: HTH-type transcriptional regulator BetI (195 aa).

The 61-residue stretch at 8–68 folds into the HTH tetR-type domain; the sequence is EIRRAQLIDA…ATMRHVLRDL (61 aa). A DNA-binding region (H-T-H motif) is located at residues 31–50; it reads TLASVAQRASISTGIVSHYF.

Its pathway is amine and polyamine biosynthesis; betaine biosynthesis via choline pathway [regulation]. Its function is as follows. Repressor involved in the biosynthesis of the osmoprotectant glycine betaine. It represses transcription of the choline transporter BetT and the genes of BetAB involved in the synthesis of glycine betaine. In Paraburkholderia phytofirmans (strain DSM 17436 / LMG 22146 / PsJN) (Burkholderia phytofirmans), this protein is HTH-type transcriptional regulator BetI.